Reading from the N-terminus, the 331-residue chain is Adenosine deaminase (331 aa).

H12 and H14 together coordinate Zn(2+). The substrate site is built by H14, D16, and G170. H197 provides a ligand contact to Zn(2+). Catalysis depends on E200, which acts as the Proton donor. D278 provides a ligand contact to Zn(2+). Position 279 (D279) interacts with substrate.

This sequence belongs to the metallo-dependent hydrolases superfamily. Adenosine and AMP deaminases family. Adenosine deaminase subfamily. The cofactor is Zn(2+).

It catalyses the reaction adenosine + H2O + H(+) = inosine + NH4(+). It carries out the reaction 2'-deoxyadenosine + H2O + H(+) = 2'-deoxyinosine + NH4(+). Functionally, catalyzes the hydrolytic deamination of adenosine and 2-deoxyadenosine. The polypeptide is Adenosine deaminase (Shewanella putrefaciens (strain CN-32 / ATCC BAA-453)).